The following is a 166-amino-acid chain: Large ribosomal subunit protein uL10 (166 aa).

It belongs to the universal ribosomal protein uL10 family. In terms of assembly, part of the ribosomal stalk of the 50S ribosomal subunit. The N-terminus interacts with L11 and the large rRNA to form the base of the stalk. The C-terminus forms an elongated spine to which L12 dimers bind in a sequential fashion forming a multimeric L10(L12)X complex.

In terms of biological role, forms part of the ribosomal stalk, playing a central role in the interaction of the ribosome with GTP-bound translation factors. In Shewanella sediminis (strain HAW-EB3), this protein is Large ribosomal subunit protein uL10.